A 239-amino-acid polypeptide reads, in one-letter code: Sugar fermentation stimulation protein homolog (239 aa).

The protein belongs to the SfsA family.

This Synechococcus sp. (strain JA-3-3Ab) (Cyanobacteria bacterium Yellowstone A-Prime) protein is Sugar fermentation stimulation protein homolog.